Here is a 1305-residue protein sequence, read N- to C-terminus: RNA-directed RNA polymerase (1305 aa).

Residues 563–814 enclose the RdRp catalytic domain; sequence IIVGDLEATG…KTLIAPFSVE (252 aa).

This sequence belongs to the reoviridae RNA-directed RNA polymerase family.

The catalysed reaction is RNA(n) + a ribonucleoside 5'-triphosphate = RNA(n+1) + diphosphate. The chain is RNA-directed RNA polymerase (Segment-1) from African horse sickness virus (AHSV).